The sequence spans 275 residues: tRNA (guanine-N(7)-)-methyltransferase (275 aa).

The interval 1-73 (MRHHGRMHAR…GGQQDTWERL (73 aa)) is disordered. The segment covering 46–59 (AHRHRRVTSFRSRR) has biased composition (basic residues). S-adenosyl-L-methionine contacts are provided by E107, E132, D159, and D182. D182 is a catalytic residue. Substrate-binding positions include K186, D218, and 254–257 (TKYE).

It belongs to the class I-like SAM-binding methyltransferase superfamily. TrmB family.

The catalysed reaction is guanosine(46) in tRNA + S-adenosyl-L-methionine = N(7)-methylguanosine(46) in tRNA + S-adenosyl-L-homocysteine. It participates in tRNA modification; N(7)-methylguanine-tRNA biosynthesis. In terms of biological role, catalyzes the formation of N(7)-methylguanine at position 46 (m7G46) in tRNA. The polypeptide is tRNA (guanine-N(7)-)-methyltransferase (Mycobacterium sp. (strain KMS)).